Reading from the N-terminus, the 327-residue chain is Glycerol-3-phosphate dehydrogenase [NAD(P)+] (327 aa).

Residues phenylalanine 13, arginine 34, and lysine 107 each contribute to the NADPH site. 2 residues coordinate sn-glycerol 3-phosphate: lysine 107 and glycine 135. An NADPH-binding site is contributed by alanine 139. Sn-glycerol 3-phosphate is bound by residues lysine 190, aspartate 243, serine 253, arginine 254, and asparagine 255. Lysine 190 functions as the Proton acceptor in the catalytic mechanism. Arginine 254 serves as a coordination point for NADPH. Residues valine 276 and glutamate 277 each coordinate NADPH.

This sequence belongs to the NAD-dependent glycerol-3-phosphate dehydrogenase family.

It localises to the cytoplasm. The catalysed reaction is sn-glycerol 3-phosphate + NAD(+) = dihydroxyacetone phosphate + NADH + H(+). It catalyses the reaction sn-glycerol 3-phosphate + NADP(+) = dihydroxyacetone phosphate + NADPH + H(+). The protein operates within membrane lipid metabolism; glycerophospholipid metabolism. Catalyzes the reduction of the glycolytic intermediate dihydroxyacetone phosphate (DHAP) to sn-glycerol 3-phosphate (G3P), the key precursor for phospholipid synthesis. This Rhizobium etli (strain ATCC 51251 / DSM 11541 / JCM 21823 / NBRC 15573 / CFN 42) protein is Glycerol-3-phosphate dehydrogenase [NAD(P)+].